Consider the following 391-residue polypeptide: Zinc finger protein ubi-d4 (391 aa).

An N-acetylalanine modification is found at alanine 2. Glycyl lysine isopeptide (Lys-Gly) (interchain with G-Cter in SUMO2) cross-links involve residues lysine 10, lysine 99, lysine 107, and lysine 108. 2 disordered regions span residues 79-146 and 165-196; these read WRKK…LGEF and DDLD…ARKK. Composition is skewed to basic and acidic residues over residues 100-110 and 126-140; these read PDTDQTLKKEG and DPLE…RVDD. At serine 142 the chain carries Phosphoserine. Over residues 165-174 the composition is skewed to acidic residues; it reads DDLDDEDYEE. At tyrosine 172 the chain carries Phosphotyrosine. At threonine 176 the chain carries Phosphothreonine. Glycyl lysine isopeptide (Lys-Gly) (interchain with G-Cter in SUMO2) cross-links involve residues lysine 178 and lysine 196. Serine 200 carries the phosphoserine modification. The segment at 209–232 adopts a C2H2-type zinc-finger fold; it reads YACDICGKRYKNRPGLSYHYAHSH. Residues 233-266 form a disordered region; it reads LAEEEGEDKEDSQPPTPVSQRSEEQKSKKGPDGL. Phosphoserine is present on serine 244. The segment covering 253 to 263 has biased composition (basic and acidic residues); that stretch reads RSEEQKSKKGP. 2 consecutive PHD-type zinc fingers follow at residues 270-330 and 327-377; these read NNYC…CKCC and CKCC…CLDL. Residue serine 280 is modified to Phosphoserine. A Glycyl lysine isopeptide (Lys-Gly) (interchain with G-Cter in SUMO2) cross-link involves residue lysine 281.

The protein belongs to the requiem/DPF family. Interacts with the nucleosomes, in particular nucleosomes bearing histone H3 crotonylated at 'Lys-14' (H3K14cr) for which DPF2 has high affinity. Also interacts (via PHD-type zinc finger domains) with histone H3 butyrylated at 'Lys-14' (H3K14bu), histone H3 propionylated at 'Lys-14' (H3K14pr), and histone H3 acetylated at 'Lys-14' (H3K14ac). Interacts with histone H3 acetylated at 'Lys-9' (H3K9ac), histone H3 di-methylated at 'Lys-9' (H3K9me2), and histone H3 tri-methylated at 'Lys-9' (H3K9me3). Interacts with histone H4 acetylated at 'Lys-12' (H4K12ac). Interacts with histone H4 acetylated at 'Lys-16' (H4K16ac). Interacts with SWI/SNF complex components. Interacts with SMARCA2, SMARCA4, SMARCB1 and SMARCD1. Interacts with SMARCC1, SMARCC2 and ACTL6A. Interacts with RUNX1. Ubiquitous.

The protein localises to the nucleus. Its subcellular location is the cytoplasm. Plays an active role in transcriptional regulation by binding modified histones H3 and H4. Is a negative regulator of myeloid differentiation of hematopoietic progenitor cells. Might also have a role in the development and maturation of lymphoid cells. Involved in the regulation of non-canonical NF-kappa-B pathway. This is Zinc finger protein ubi-d4 (DPF2) from Homo sapiens (Human).